The sequence spans 550 residues: Glucose-6-phosphate isomerase (550 aa).

Glu-356 acts as the Proton donor in catalysis. Residues His-387 and Lys-515 contribute to the active site.

It belongs to the GPI family.

The protein resides in the cytoplasm. The enzyme catalyses alpha-D-glucose 6-phosphate = beta-D-fructose 6-phosphate. It functions in the pathway carbohydrate biosynthesis; gluconeogenesis. It participates in carbohydrate degradation; glycolysis; D-glyceraldehyde 3-phosphate and glycerone phosphate from D-glucose: step 2/4. Catalyzes the reversible isomerization of glucose-6-phosphate to fructose-6-phosphate. This chain is Glucose-6-phosphate isomerase, found in Aliivibrio fischeri (strain MJ11) (Vibrio fischeri).